A 609-amino-acid polypeptide reads, in one-letter code: DNA-directed RNA polymerase subunit beta' (609 aa).

Zn(2+) is bound by residues Cys-67, Cys-69, Cys-82, and Cys-85. Mg(2+) contacts are provided by Asp-460, Asp-462, and Asp-464.

This sequence belongs to the RNA polymerase beta' chain family. RpoC1 subfamily. In plastids the minimal PEP RNA polymerase catalytic core is composed of four subunits: alpha, beta, beta', and beta''. When a (nuclear-encoded) sigma factor is associated with the core the holoenzyme is formed, which can initiate transcription. Requires Mg(2+) as cofactor. It depends on Zn(2+) as a cofactor.

The protein localises to the plastid. Its subcellular location is the chloroplast. It catalyses the reaction RNA(n) + a ribonucleoside 5'-triphosphate = RNA(n+1) + diphosphate. Its function is as follows. DNA-dependent RNA polymerase catalyzes the transcription of DNA into RNA using the four ribonucleoside triphosphates as substrates. The protein is DNA-directed RNA polymerase subunit beta' of Emiliania huxleyi (Coccolithophore).